Here is a 69-residue protein sequence, read N- to C-terminus: U-Asilidin(12)-Dg3a (69 aa).

The first 19 residues, 1-19 (MRFLNIFLFFAAIIAFATA), serve as a signal peptide directing secretion. Positions 20–33 (SQVFEEDEIDMEPR) are excised as a propeptide. 3 disulfides stabilise this stretch: C36–C59, C45–C65, and C49–C67.

It belongs to the asilidin-12 family. Expressed by the venom gland.

The protein resides in the secreted. Its function is as follows. Moderately increases Kv11.1/KCNH2/ERG1 currents and shifts the voltage-dependence of the channel activation to hyperpolarised potentials. In vivo, induces neurotoxic effects when injected into insects (tested on L.cuprina and A.domesticus). This is U-Asilidin(12)-Dg3a from Dolopus genitalis (Giant Australian assassin fly).